Here is a 32-residue protein sequence, read N- to C-terminus: Dermaseptin-8 (32 aa).

Q32 is modified (glutamine amide).

Expressed by the skin glands.

It is found in the secreted. In terms of biological role, antimicrobial peptide, active against the Gram-positive bacterium S.aureus, and the Gram-negative bacteriun E.coli. Has hemolytic activity at 432 uM. The protein is Dermaseptin-8 of Phyllomedusa tarsius (Brownbelly leaf frog).